A 332-amino-acid chain; its full sequence is Glycerol-3-phosphate dehydrogenase [NAD(P)+] (332 aa).

The NADPH site is built by tryptophan 11, arginine 30, and lysine 108. The sn-glycerol 3-phosphate site is built by lysine 108, glycine 137, and serine 139. Residue alanine 141 participates in NADPH binding. The sn-glycerol 3-phosphate site is built by lysine 192, aspartate 245, serine 255, arginine 256, and asparagine 257. Catalysis depends on lysine 192, which acts as the Proton acceptor. Arginine 256 is a binding site for NADPH. Valine 280 and glutamate 282 together coordinate NADPH.

It belongs to the NAD-dependent glycerol-3-phosphate dehydrogenase family.

It localises to the cytoplasm. The enzyme catalyses sn-glycerol 3-phosphate + NAD(+) = dihydroxyacetone phosphate + NADH + H(+). It catalyses the reaction sn-glycerol 3-phosphate + NADP(+) = dihydroxyacetone phosphate + NADPH + H(+). It functions in the pathway membrane lipid metabolism; glycerophospholipid metabolism. In terms of biological role, catalyzes the reduction of the glycolytic intermediate dihydroxyacetone phosphate (DHAP) to sn-glycerol 3-phosphate (G3P), the key precursor for phospholipid synthesis. The sequence is that of Glycerol-3-phosphate dehydrogenase [NAD(P)+] from Burkholderia vietnamiensis (strain G4 / LMG 22486) (Burkholderia cepacia (strain R1808)).